The primary structure comprises 205 residues: MTNIVWHQHPVDQAARAEQKGQNPVLLWFTGLSGAGKSTLAGALERALFEAGFHTYLLDGDNVRHGLCKDLGFTVEDRDENLRRVGEVAKLMVDAGLVVLSAFISPTREERDSIRARFPASQFIEVHVSTPLSVCEQRDPKGLYVKARSGEISNFTGISSPYEAPLAAELTIDTSKGDLATQVRALIDYLTAINVINADKAKALA.

An ATP-binding site is contributed by 31–38 (GLSGAGKS). The Phosphoserine intermediate role is filled by serine 105.

This sequence belongs to the APS kinase family.

The enzyme catalyses adenosine 5'-phosphosulfate + ATP = 3'-phosphoadenylyl sulfate + ADP + H(+). Its pathway is sulfur metabolism; hydrogen sulfide biosynthesis; sulfite from sulfate: step 2/3. Catalyzes the synthesis of activated sulfate. In Shewanella baltica (strain OS223), this protein is Adenylyl-sulfate kinase.